Reading from the N-terminus, the 268-residue chain is Tropinone reductase homolog At2g29370 (268 aa).

Position 22 to 46 (Leu22 to His46) interacts with NADP(+). Ser155 is a substrate binding site. The Proton acceptor role is filled by Tyr168.

Belongs to the short-chain dehydrogenases/reductases (SDR) family. SDR65C subfamily.

The protein is Tropinone reductase homolog At2g29370 of Arabidopsis thaliana (Mouse-ear cress).